Reading from the N-terminus, the 320-residue chain is Peroxidase 66 (320 aa).

The signal sequence occupies residues 1 to 29 (MAASVSASCLNRLSSLAVVLVALASAASA). Position 30 is a pyrrolidone carboxylic acid (Gln-30). Cystine bridges form between Cys-40–Cys-118, Cys-73–Cys-78, Cys-124–Cys-315, and Cys-202–Cys-227. Residue His-71 is the Proton acceptor of the active site. Residues Asp-72, Val-75, Gly-77, Asp-79, and Ser-81 each contribute to the Ca(2+) site. N-linked (GlcNAc...) asparagine glycans are attached at residues Asn-85 and Asn-96. Pro-165 is a binding site for substrate. Heme b is bound at residue His-195. Thr-196 serves as a coordination point for Ca(2+). N-linked (GlcNAc...) asparagine glycosylation occurs at Asn-211. Asp-239, Thr-242, and Asp-247 together coordinate Ca(2+).

This sequence belongs to the peroxidase family. Classical plant (class III) peroxidase subfamily. It depends on heme b as a cofactor. The cofactor is Ca(2+).

It localises to the secreted. It catalyses the reaction 2 a phenolic donor + H2O2 = 2 a phenolic radical donor + 2 H2O. Its function is as follows. Removal of H(2)O(2), oxidation of toxic reductants, biosynthesis and degradation of lignin, suberization, auxin catabolism, response to environmental stresses such as wounding, pathogen attack and oxidative stress. These functions might be dependent on each isozyme/isoform in each plant tissue. In Zea mays (Maize), this protein is Peroxidase 66 (PER66).